A 239-amino-acid polypeptide reads, in one-letter code: MPNSQTSNSQPQVSEKDVDTGFRKGDDTFTHWRNVFNILTGRMTDEGIEQFRVARDLRNEAADCKRCEDQRDYLLQWSPIIRYMSDSIRQLGGDLSSHNIYCRRCTNRKAGGFDPEYGILICANEMKDQGHLEDTMAHEMVHAYDHLRFKVDWTNNLRHAACTEIRASSLSGECRWAREFFRRGQWKLTQQHQECVRRRAVLSVMARPGCQDKGHAEKVVNEVWDSCFRDTRPFDEIFR.

Positions 1–13 (MPNSQTSNSQPQV) are enriched in polar residues. A disordered region spans residues 1–22 (MPNSQTSNSQPQVSEKDVDTGF). An a divalent metal cation-binding site is contributed by histidine 138. Glutamate 139 is a catalytic residue. Histidine 142 is a binding site for a divalent metal cation.

Belongs to the peptidase M76 family.

Its subcellular location is the mitochondrion inner membrane. Functionally, has a dual role in the assembly of mitochondrial ATPase. Acts as a protease that removes N-terminal residues of mitochondrial ATPase CF(0) subunit 6 at the intermembrane space side. Also involved in the correct assembly of the membrane-embedded ATPase CF(0) particle, probably mediating association of subunit 6 with the subunit 9 ring. This is Mitochondrial inner membrane protease atp23 (atp23) from Emericella nidulans (strain FGSC A4 / ATCC 38163 / CBS 112.46 / NRRL 194 / M139) (Aspergillus nidulans).